Here is a 160-residue protein sequence, read N- to C-terminus: Putative lipoprotein YfiB (160 aa).

Positions Met1 to Gly18 are cleaved as a signal peptide. The N-palmitoyl cysteine moiety is linked to residue Cys19. Cys19 carries S-diacylglycerol cysteine lipidation. The 118-residue stretch at Ala43–Pro160 folds into the OmpA-like domain.

This sequence belongs to the outer membrane OOP (TC 1.B.6) superfamily.

The protein localises to the cell membrane. This is Putative lipoprotein YfiB (yfiB) from Escherichia coli (strain K12).